Here is a 631-residue protein sequence, read N- to C-terminus: tRNA uridine 5-carboxymethylaminomethyl modification enzyme MnmG (631 aa).

FAD is bound by residues 15–20 (GAGHAG), I127, and S182. 276–290 (GPRYCPSIEDKIVRF) is an NAD(+) binding site. Q373 is an FAD binding site.

It belongs to the MnmG family. In terms of assembly, homodimer. Heterotetramer of two MnmE and two MnmG subunits. The cofactor is FAD.

The protein localises to the cytoplasm. In terms of biological role, NAD-binding protein involved in the addition of a carboxymethylaminomethyl (cmnm) group at the wobble position (U34) of certain tRNAs, forming tRNA-cmnm(5)s(2)U34. The protein is tRNA uridine 5-carboxymethylaminomethyl modification enzyme MnmG of Streptococcus mutans serotype c (strain ATCC 700610 / UA159).